A 79-amino-acid polypeptide reads, in one-letter code: TAMFLAMHYTSDIATAFSSVAHICRDVNYGWLIRNMHANGASFFFICIYLHIGRGLYYGSYLYKETWNVGVILLLLTMM.

Helical transmembrane passes span 1–7 (TAMFLAM), 31–52 (WLIR…YLHI), and 67–79 (WNVG…LTMM). Residues His37 and His51 each contribute to the heme b site.

It belongs to the cytochrome b family. The cytochrome bc1 complex contains 3 respiratory subunits (MT-CYB, CYC1 and UQCRFS1), 2 core proteins (UQCRC1 and UQCRC2) and probably 6 low-molecular weight proteins. Heme b is required as a cofactor.

It is found in the mitochondrion inner membrane. Functionally, component of the ubiquinol-cytochrome c reductase complex (complex III or cytochrome b-c1 complex) that is part of the mitochondrial respiratory chain. The b-c1 complex mediates electron transfer from ubiquinol to cytochrome c. Contributes to the generation of a proton gradient across the mitochondrial membrane that is then used for ATP synthesis. This chain is Cytochrome b (mt-cyb), found in Hypsophrys nicaraguensis (Moga).